A 102-amino-acid polypeptide reads, in one-letter code: Putative pterin-4-alpha-carbinolamine dehydratase (102 aa).

This sequence belongs to the pterin-4-alpha-carbinolamine dehydratase family.

The enzyme catalyses (4aS,6R)-4a-hydroxy-L-erythro-5,6,7,8-tetrahydrobiopterin = (6R)-L-erythro-6,7-dihydrobiopterin + H2O. This is Putative pterin-4-alpha-carbinolamine dehydratase from Burkholderia vietnamiensis (strain G4 / LMG 22486) (Burkholderia cepacia (strain R1808)).